Reading from the N-terminus, the 827-residue chain is MTFCYPCRAFALLTRGFTSFMSGWPRIYYKLLNLPLSILVKSKSIPADPAPELGLDTSRPIMYVLPYNSKADLLTLRAQCLAHDLPDPLEPLEIDGTLLPRYVFIHGGPRVFTYYTPKEESIKLFHDYLDLHRSNPNLDVQMVPVSVMFGRAPGREKGEVNPPLRMLNGVQKFFAVLWLGRDSFVRFSPSVSLRRMADEHGTDKTIAQKLARVARMHFARQRLAAVGPRLPARQDLFNKLLASRAIAKAVEDEARSKKISHEKAQQNAIALMEEIAANFSYEMIRLTDRILGFTWNRLYQGINVHNAERVRQLAHDGHELVYVPCHRSHMDYLLLSYVLYHQGLVPPHIAAGINLNFWPAGPIFRRLGAFFIRRTFKGNKLYSTVFREYLGELFSRGYSVEYFVEGGRSRTGRLLDPKTGTLSMTIQAMLRGGTRPITLIPIYIGYEHVMEVGTYAKELRGATKEKESLPQMLRGLSKLRNLGQGYVNFGEPMPLMTYLNQHVPDWRESIDPIEAVRPAWLTPTVNNIAADLMVRINNAGAANAMNLCCTALLASRQRSLTREQLTEQLNCYLDLMRNVPYSTDSTVPSASASELIDHALQMNKFEVEKDTIGDIIILPREQAVLMTYYRNNIAHMLVLPSLMAAIVTQHRHISRDVLMEHVNVLYPMLKAELFLRWDRDELPDVIDALANEMQRQGLITLQDDELHINPAHSRPLQLLAAGARETLQRYAITFWLLSANPSINRGTLEKESRTVAQRLSVLHGINAPEFFDKAVFSSLVLTLRDEGYISDSGDAEPAETMKVYQLLAELITSDVRLTIESATQGEG.

The short motif at 325 to 330 is the HXXXXD motif element; it reads CHRSHM.

The protein belongs to the GPAT/DAPAT family.

It is found in the cell inner membrane. The enzyme catalyses sn-glycerol 3-phosphate + an acyl-CoA = a 1-acyl-sn-glycero-3-phosphate + CoA. Its pathway is phospholipid metabolism; CDP-diacylglycerol biosynthesis; CDP-diacylglycerol from sn-glycerol 3-phosphate: step 1/3. The sequence is that of Glycerol-3-phosphate acyltransferase from Shigella sonnei (strain Ss046).